A 737-amino-acid polypeptide reads, in one-letter code: Acetylcholinesterase (737 aa).

The signal sequence occupies residues 1-38 (MEIRGLLMGRLRLGRRMVPLGLLGVTALLLILPPFALV). Residues 141–168 (HSGATPRRRGLTRRESNSDANDNDPLVV) form a disordered region. Asn-220 is a glycosylation site (N-linked (GlcNAc...) asparagine). Cys-228 and Cys-255 are joined by a disulfide. Ser-360 acts as the Acyl-ester intermediate in catalysis. Cys-414 and Cys-427 are joined by a disulfide. Residues Glu-486 and His-600 each act as charge relay system in the active site. Cys-562 and Cys-683 are disulfide-bonded. The N-linked (GlcNAc...) asparagine glycan is linked to Asn-670.

This sequence belongs to the type-B carboxylesterase/lipase family.

It localises to the synapse. It carries out the reaction acetylcholine + H2O = choline + acetate + H(+). Functionally, rapidly hydrolyzes choline released into the synapse. This Anopheles gambiae (African malaria mosquito) protein is Acetylcholinesterase (Ace).